A 262-amino-acid polypeptide reads, in one-letter code: tRNA pseudouridine synthase A (262 aa).

The Nucleophile role is filled by Asp-51. Tyr-109 lines the substrate pocket.

This sequence belongs to the tRNA pseudouridine synthase TruA family. Homodimer.

The enzyme catalyses uridine(38/39/40) in tRNA = pseudouridine(38/39/40) in tRNA. Formation of pseudouridine at positions 38, 39 and 40 in the anticodon stem and loop of transfer RNAs. In Dechloromonas aromatica (strain RCB), this protein is tRNA pseudouridine synthase A.